We begin with the raw amino-acid sequence, 135 residues long: Protein PsiE homolog (135 aa).

Transmembrane regions (helical) follow at residues 13-33 (VLQW…VIFL), 54-74 (YMLV…ALIV), 82-102 (HFPL…LIIV), and 107-127 (PNDT…LYLA).

The protein belongs to the PsiE family.

The protein resides in the cell inner membrane. This Edwardsiella ictaluri (strain 93-146) protein is Protein PsiE homolog.